The chain runs to 348 residues: Anthranilate phosphoribosyltransferase (348 aa).

5-phospho-alpha-D-ribose 1-diphosphate contacts are provided by residues glycine 93, 96–97 (GD), threonine 101, 103–106 (NVST), 121–129 (KHGNRAVSS), and serine 133. An anthranilate-binding site is contributed by glycine 93. Mg(2+) is bound at residue serine 105. Asparagine 124 is an anthranilate binding site. Residue arginine 179 coordinates anthranilate. Residues aspartate 238 and glutamate 239 each contribute to the Mg(2+) site.

This sequence belongs to the anthranilate phosphoribosyltransferase family. Homodimer. It depends on Mg(2+) as a cofactor.

It carries out the reaction N-(5-phospho-beta-D-ribosyl)anthranilate + diphosphate = 5-phospho-alpha-D-ribose 1-diphosphate + anthranilate. The protein operates within amino-acid biosynthesis; L-tryptophan biosynthesis; L-tryptophan from chorismate: step 2/5. Its function is as follows. Catalyzes the transfer of the phosphoribosyl group of 5-phosphorylribose-1-pyrophosphate (PRPP) to anthranilate to yield N-(5'-phosphoribosyl)-anthranilate (PRA). The sequence is that of Anthranilate phosphoribosyltransferase from Desulfotalea psychrophila (strain LSv54 / DSM 12343).